A 324-amino-acid chain; its full sequence is Glutaminase 2 (324 aa).

Residues S75, N127, E171, N178, Y202, Y254, and V272 each contribute to the substrate site.

Belongs to the glutaminase family. Homotetramer.

It carries out the reaction L-glutamine + H2O = L-glutamate + NH4(+). In Halalkalibacterium halodurans (strain ATCC BAA-125 / DSM 18197 / FERM 7344 / JCM 9153 / C-125) (Bacillus halodurans), this protein is Glutaminase 2.